The chain runs to 819 residues: USP6 N-terminal-like protein (819 aa).

Met1 carries the N-acetylmethionine modification. A Rab-GAP TBC domain is found at 100-292 (GIPLQLRGEV…RIWDIYIFEG (193 aa)). The span at 355–367 (DLPEPGKEDEYPK) shows a compositional bias: basic and acidic residues. Disordered stretches follow at residues 355–498 (DLPE…ERTT) and 513–678 (LPVA…SRPT). Phosphoserine is present on residues Ser389, Ser394, and Ser398. Composition is skewed to basic and acidic residues over residues 399–414 (SRREDGSPRKNHEHSP) and 432–449 (KSVDEGSKNLKHEAESQR). A compositionally biased stretch (low complexity) spans 464–476 (HAAANQNSNAISN). Composition is skewed to basic and acidic residues over residues 477 to 489 (VRKEFMPKWRKPS) and 533 to 542 (KALDGGEGKR). Ser544 and Ser547 each carry phosphoserine. Residues 556–571 (ESEHGASAEEGPERTH) are compositionally biased toward basic and acidic residues. Phosphoserine is present on residues Ser574, Ser631, Ser644, Ser648, Ser665, Ser669, and Ser704. Residues 642–655 (FVSTQISPRPQINP) show a composition bias toward polar residues. The residue at position 717 (Tyr717) is a Phosphotyrosine. Residues 788–802 (ASPPGYPYAGPSPSA) show a composition bias toward low complexity. Positions 788 to 807 (ASPPGYPYAGPSPSAHHYRN) are disordered.

In terms of assembly, interacts with EPS8.

Its subcellular location is the golgi apparatus. It localises to the cytoplasmic vesicle. Functionally, acts as a GTPase-activating protein for RAB5A and RAB43. Involved in receptor trafficking. In complex with EPS8 inhibits internalization of EGFR. Involved in retrograde transport from the endocytic pathway to the Golgi apparatus. Involved in the transport of Shiga toxin from early and recycling endosomes to the trans-Golgi network. Required for structural integrity of the Golgi complex. In Mus musculus (Mouse), this protein is USP6 N-terminal-like protein (Usp6nl).